The sequence spans 336 residues: Cytoplasmic envelopment protein 2 (336 aa).

Residues 67–69 (KKK) form an interaction with host BBLF1 region.

Belongs to the herpesviridae cytoplasmic envelopment protein 2 family. As to quaternary structure, homodimer. Interacts with BBLF1. Interacts with the capsid. Interacts with BKRF4 (via C-terminus); this interaction is important for infectious virion production. Interacts with host TYK2; this interaction participates to the inhibition of host type I IFN signaling. Interacts with host STAT1; this interaction leads to STAT1 dephosphorylation and inhibition. Interacts with host STAT2; this interaction leads to STAT2 degradation. Interacts with host CUL1; this interaction might facilitate CUL1 recruitment to STAT2, leading to ubiquitination and degradation of the latter. Interacts with host AGO2; this interaction participates to the host miRNA regulation leading to enhanced SUMOylation.

Its subcellular location is the virion tegument. The protein resides in the host cytoplasm. It is found in the host nucleus. It localises to the host Golgi apparatus. The protein localises to the host trans-Golgi network. Plays a critical role in cytoplasmic virus egress. Participates in the final step of tegumentation and envelope acquisition within the host cytoplasm by directly interacting with the capsid. Upon virion binding to target cell, a signaling cascade is triggered to disrupt the interaction with the capsid, thereby preparing capsid uncoating. Activates the AP-1 pathway and enhances EBV reactivation and virus release. Inhibits type I IFN-induced TYK2, STAT1 and STAT3 phosphorylation, thereby impairing type I IFN signaling and counteracting the ability of IFN-alpha to suppress the reactivation of EBV. Recruits SHP1 phosphatase to dephosphorylate STAT1. Mediates STAT2 ubiquitination and proteasomal degradation. Also suppresses type II and type III IFN signaling. Contributes to G1/S arrest in the host cell. Acts as an miRNA regulator that interferes with the function of RISC in miRNA-mediated mRNA silencing. As a result, SUMOylation is increased. When encapsulated in the exosomes released by EBV-infected host cells, may facilitate the infection in recipient cells. The polypeptide is Cytoplasmic envelopment protein 2 (Epstein-Barr virus (strain AG876) (HHV-4)).